We begin with the raw amino-acid sequence, 306 residues long: Agmatinase (306 aa).

Positions 126, 149, 151, 153, 230, and 232 each coordinate Mn(2+).

The protein belongs to the arginase family. Agmatinase subfamily. Mn(2+) is required as a cofactor.

The enzyme catalyses agmatine + H2O = urea + putrescine. It participates in amine and polyamine biosynthesis; putrescine biosynthesis via agmatine pathway; putrescine from agmatine: step 1/1. In terms of biological role, catalyzes the formation of putrescine from agmatine. The protein is Agmatinase of Escherichia coli O9:H4 (strain HS).